The chain runs to 207 residues: Ribosomal RNA small subunit methyltransferase G (207 aa).

S-adenosyl-L-methionine-binding positions include Gly73, Leu78, 124–125 (VE), and Arg139.

Belongs to the methyltransferase superfamily. RNA methyltransferase RsmG family.

The protein resides in the cytoplasm. It carries out the reaction guanosine(527) in 16S rRNA + S-adenosyl-L-methionine = N(7)-methylguanosine(527) in 16S rRNA + S-adenosyl-L-homocysteine. Its function is as follows. Specifically methylates the N7 position of guanine in position 527 of 16S rRNA. This Salmonella arizonae (strain ATCC BAA-731 / CDC346-86 / RSK2980) protein is Ribosomal RNA small subunit methyltransferase G.